The chain runs to 301 residues: MMAGGGSGRCLFTATQWQELEHQALIYKYMAAGAPVPPDLLLHLRHRAAAAAAADVDTVPSLAFPPHHLGWGCYGAAAAQYGRRVEDPEPGRCRRTDGKKWRCSREAYGESKYCEKHMHRGKNRSRKPVEMPPPAAAAVYRPSALSISPPPHDADAPSYGAGAGAPLQLHLDSFHASTSPPPSYHRYAHTSSAPLFPSSAAGYGGGWSLSKEHCLTLGGAAADLSLDKPADHHHDATSATTEKPLRRFFDEWPRSDDGRTPWDGTQLSISIPTAAAASPDLAIAGAASRYHSNGDHLRTSE.

Positions 11 to 46 constitute a QLQ domain; it reads LFTATQWQELEHQALIYKYMAAGAPVPPDLLLHLRH. 2 consecutive short sequence motifs (bipartite nuclear localization signal) follow at residues 83–102 and 120–127; these read RRVEDPEPGRCRRTDGKKWR and RGKNRSRK. The region spanning 87–131 is the WRC domain; it reads DPEPGRCRRTDGKKWRCSREAYGESKYCEKHMHRGKNRSRKPVEM.

The protein belongs to the GRF family.

It is found in the nucleus. Its function is as follows. Transcription activator that plays a regulatory role in gibberellin-induced stem elongation. The chain is Growth-regulating factor 2 (GRF2) from Oryza sativa subsp. japonica (Rice).